A 157-amino-acid chain; its full sequence is Polyferredoxin protein VhcB (157 aa).

4Fe-4S ferredoxin-type domains follow at residues 23 to 52 (NGIS…VVNP), 62 to 92 (KTER…MGKI), and 100 to 129 (DRIE…LNEE). Residues C32, C35, C38, C42, C72, C75, C78, C82, C109, C112, C115, C119, C136, C139, C142, and C146 each coordinate [4Fe-4S] cluster.

[4Fe-4S] cluster serves as cofactor.

The polypeptide is Polyferredoxin protein VhcB (vhcB) (Methanococcus voltae).